A 342-amino-acid polypeptide reads, in one-letter code: MCAINKAYLLTKFYISANSCAFFVKSQRKWTSPDLSEDVAQKFLETASEMKFDASKQVLVHGSYLINMANADEQKREQAFNCFVDDLKRCERLGVGLYNFHPGSTASCTKEEGINNLAECINRAHEETKSVIIVTENMAGQGNCLGGTFDDFAALKSKIKNLDRWRVCLDTCHTFAAGYDIRTEESYKKVIDEFDEKVGAKYVSGWHLNDSKAPLGSNRDLHENIGLGFLGLEPFRLIMNDSRWDGIPLVLETPAKSPEQWKKEVELLRFMVGKSSDDVELMKESARLSNLGAASRKEHLNKFEKKEAKKDRKKKSKDGDQTTLLLRKKQKLGNAEVKSLDE.

Zn(2+) contacts are provided by His61, Glu136, Asp170, His173, His207, Asp220, His222, and Glu252. Basic and acidic residues predominate over residues 299–310; that stretch reads HLNKFEKKEAKK. Residues 299 to 342 are disordered; the sequence is HLNKFEKKEAKKDRKKKSKDGDQTTLLLRKKQKLGNAEVKSLDE.

Belongs to the AP endonuclease 2 family. The cofactor is Zn(2+).

It is found in the nucleus. Its function is as follows. DNA repair enzyme that cleaves apurinic/apyrimidinic (AP) sites and removes 3'-blocking groups present at single strand breaks of damaged DNA. Provides back-up AP endonuclease (APE) activity to apn2 together with uve1. The polypeptide is Apurinic-apyrimidinic endonuclease 1 (apn1) (Schizosaccharomyces pombe (strain 972 / ATCC 24843) (Fission yeast)).